The primary structure comprises 157 residues: SsrA-binding protein (157 aa).

Residues 130–157 (HDKRQDMAKKDSQRRIQKELGQRQKGME) form a disordered region. Positions 132–157 (KRQDMAKKDSQRRIQKELGQRQKGME) are enriched in basic and acidic residues.

This sequence belongs to the SmpB family.

The protein resides in the cytoplasm. In terms of biological role, required for rescue of stalled ribosomes mediated by trans-translation. Binds to transfer-messenger RNA (tmRNA), required for stable association of tmRNA with ribosomes. tmRNA and SmpB together mimic tRNA shape, replacing the anticodon stem-loop with SmpB. tmRNA is encoded by the ssrA gene; the 2 termini fold to resemble tRNA(Ala) and it encodes a 'tag peptide', a short internal open reading frame. During trans-translation Ala-aminoacylated tmRNA acts like a tRNA, entering the A-site of stalled ribosomes, displacing the stalled mRNA. The ribosome then switches to translate the ORF on the tmRNA; the nascent peptide is terminated with the 'tag peptide' encoded by the tmRNA and targeted for degradation. The ribosome is freed to recommence translation, which seems to be the essential function of trans-translation. The protein is SsrA-binding protein of Alkaliphilus metalliredigens (strain QYMF).